The following is a 735-amino-acid chain: Catalase-peroxidase (735 aa).

Positions 1 to 26 (MENQNRQNASQCPFHGSITNQSSNRT) are enriched in polar residues. A disordered region spans residues 1-29 (MENQNRQNASQCPFHGSITNQSSNRTTNK). The segment at residues 100–223 (WHSAGTYRIG…LAASVMGLIY (124 aa)) is a cross-link (tryptophyl-tyrosyl-methioninium (Trp-Tyr) (with M-249)). The Proton acceptor role is filled by His101. Residues 223–249 (YVNPEGPDGKPDPKAAARDIRETFRRM) constitute a cross-link (tryptophyl-tyrosyl-methioninium (Tyr-Met) (with W-100)). Position 264 (His264) interacts with heme b.

Belongs to the peroxidase family. Peroxidase/catalase subfamily. As to quaternary structure, homodimer or homotetramer. Requires heme b as cofactor. Post-translationally, formation of the three residue Trp-Tyr-Met cross-link is important for the catalase, but not the peroxidase activity of the enzyme.

The enzyme catalyses H2O2 + AH2 = A + 2 H2O. It catalyses the reaction 2 H2O2 = O2 + 2 H2O. Functionally, bifunctional enzyme with both catalase and broad-spectrum peroxidase activity. This is Catalase-peroxidase from Geobacillus thermodenitrificans (strain NG80-2).